A 291-amino-acid polypeptide reads, in one-letter code: Elongation factor Ts (291 aa).

The segment at 80–83 (TDFV) is involved in Mg(2+) ion dislocation from EF-Tu.

Belongs to the EF-Ts family.

It localises to the cytoplasm. Associates with the EF-Tu.GDP complex and induces the exchange of GDP to GTP. It remains bound to the aminoacyl-tRNA.EF-Tu.GTP complex up to the GTP hydrolysis stage on the ribosome. This is Elongation factor Ts from Acinetobacter baumannii (strain AB307-0294).